The chain runs to 212 residues: 2-C-methyl-D-erythritol 4-phosphate cytidylyltransferase (212 aa).

Belongs to the IspD/TarI cytidylyltransferase family. IspD subfamily.

The catalysed reaction is 2-C-methyl-D-erythritol 4-phosphate + CTP + H(+) = 4-CDP-2-C-methyl-D-erythritol + diphosphate. It participates in isoprenoid biosynthesis; isopentenyl diphosphate biosynthesis via DXP pathway; isopentenyl diphosphate from 1-deoxy-D-xylulose 5-phosphate: step 2/6. Its function is as follows. Catalyzes the formation of 4-diphosphocytidyl-2-C-methyl-D-erythritol from CTP and 2-C-methyl-D-erythritol 4-phosphate (MEP). This Chlamydia felis (strain Fe/C-56) (Chlamydophila felis) protein is 2-C-methyl-D-erythritol 4-phosphate cytidylyltransferase.